The chain runs to 195 residues: Mannitol operon repressor (195 aa).

This sequence belongs to the MtlR/FumE family. As to quaternary structure, homodimer. Can also form higher level multimer aggregates.

Its function is as follows. Involved in the repression of the expression of the mannitol mtlADR operon. Does not bind the operator/promoter regulatory region of this operon. Therefore, seems to belong to a new class of transcription factors in bacteria that may regulate gene expression indirectly, perhaps as a part of a larger transcriptional complex. This Escherichia coli O6:H1 (strain CFT073 / ATCC 700928 / UPEC) protein is Mannitol operon repressor.